The sequence spans 440 residues: MDRTEPDDELLQTIVTQTAGCGSILLAYSGGLDSSVLLHLLVTVRQRSGQTIRAAYIHHGLNPLADSWAEHCRQQCERWQVPFSSLAVTVEAQNGGIEAAARTARYQALQVHLKEGETLLTAQHLDDQSETFLLALKRGSGPAGLSAMAANSFLGHHRLVRPLLGFSRLQLEAYAQRHQLRWIEDDSNQDERFDRNFLRRQILPRLTQRWPHFPSAVARSAELCAEQEQLLDELLEESLRTLRQPDGALSIDGLVPLSPVRRFALLRRWLAQQGATMPARDQLQRLWDEVAASRRDAEPILQLNQMQIRRFRQHLYLLPLMPSLKDRVLPWQPTSCPLSLPDNLGTLLLADSGVAVRAPKNGETVSIRFSTSGTVHIVGRAHGRQIKKLWQELGVPPWWRDRTPLLFYNEQLIAAVGRFVTREGQVREHQPLWHIVWERN.

Position 29–34 (29–34 (SGGLDS)) interacts with ATP.

It belongs to the tRNA(Ile)-lysidine synthase family.

The protein localises to the cytoplasm. The catalysed reaction is cytidine(34) in tRNA(Ile2) + L-lysine + ATP = lysidine(34) in tRNA(Ile2) + AMP + diphosphate + H(+). Functionally, ligates lysine onto the cytidine present at position 34 of the AUA codon-specific tRNA(Ile) that contains the anticodon CAU, in an ATP-dependent manner. Cytidine is converted to lysidine, thus changing the amino acid specificity of the tRNA from methionine to isoleucine. In Pectobacterium atrosepticum (strain SCRI 1043 / ATCC BAA-672) (Erwinia carotovora subsp. atroseptica), this protein is tRNA(Ile)-lysidine synthase.